Here is a 587-residue protein sequence, read N- to C-terminus: MDLFKILLLVFFVNISFCFAADPYSFYNFEVSYITASPLGVPQQVIAINGKFPGPTINVTTNENLVVNVRNKLDEGLLLHWNGIQQRRVSWQDGVLGTNCPIPPKWNWTYEFQVKDQIGSFFYFPSLHFQRASGGFGSFVVNPRAIIPVPFSTPDGDITVTIGDWYIRNHTALRKALDDGKDLGMPDGVLINGKGPYRYNDTLVADGIDFETITVHPGKTYRLRVSNVGISTSLNFRIQGHNLVLAESEGSYTVQQNYTSLDIHVGQSYSFLVTMDQNASSDYYIVASARVVNETIWRRVTGVGILKYTNSKGKAKGQLPPGPQDEFDKTFSMNQARSIRWNVSASGARPNPQGSFKYGSINVTDVYVLRNMPPVTISGKRRTTLNGISFKNPSTPIRLADKLKVKDVYKLDFPKRPLTGPAKVATSIINGTYRGFMEVVLQNNDTKMQSYHMSGYAFFVVGMDYGEWTENSRGTYNKWDGIARSTIQVYPGAWSAILISLDNPGAWNLRTENLDSWYLGQETYVRVVNPDENNKTEFGHPDNVLYCGALSKLQKPQKVSSSASKSIGFTSLSMVVMALVMMMMLQH.

A signal peptide spans 1–20; that stretch reads MDLFKILLLVFFVNISFCFA. N-linked (GlcNAc...) asparagine glycosylation is found at N14 and N58. H80 contacts Cu cation. N-linked (GlcNAc...) asparagine glycosylation is found at N107, N169, N200, N257, N278, N293, N342, N362, N430, and N444. H452 contacts Cu cation. An N-linked (GlcNAc...) asparagine glycan is attached at N534. S562 is lipidated: GPI-anchor amidated serine. Positions 563–587 are cleaved as a propeptide — removed in mature form; the sequence is ASKSIGFTSLSMVVMALVMMMMLQH.

The protein belongs to the multicopper oxidase family. The cofactor is Cu cation. In terms of tissue distribution, expressed in roots, hypocotyls, cotyledons, leaves, stems and flowers.

It is found in the secreted. The protein localises to the cell wall. Its subcellular location is the cell membrane. In terms of biological role, may be a monocopper oxidase of unknown specificity. Involved in directional growth processes, possibly by participating in cell wall expansion. The polypeptide is Monocopper oxidase-like protein SKU5 (SKU5) (Arabidopsis thaliana (Mouse-ear cress)).